The primary structure comprises 388 residues: MSVIKMTDLDLRGKRVLIREDLNVPVKNGKVTSDARIQAALPTIKLAMEQGAKVMVMSHLGRPEEGQFSEENSMQPVGAHLSSLLGHDVPVVRDYLDGDFEVEEGGLVLFENVRFNVGEGKDNEELSKKYAALCDIFVMDAFGTAHRAQASTHGVAKFAPVACAGPLLAAELEALGQALDKPQRPMVAIVAGSKVSTKLDVLNSLSEVCDQLIVGGGIANTFLAAADHKVGKSLCEMDLLDTARSIAAKVQIPLPTDVVTAKAFSESAEASVKPIAEVTDDDMILDIGPQSAAALAELLKSAKTILWNGPVGVFEFDQFGDGTKTLAQAIAESDAFSIAGGGDTLAAIDKYGVSEKISYISTGGGAFLEFVEGKTLPAVAMLQKRAAE.

Residues 21 to 23 (DLN), R36, 59 to 62 (HLGR), R114, and R147 each bind substrate. Residues K198, E315, and 341-344 (GGDT) contribute to the ATP site.

This sequence belongs to the phosphoglycerate kinase family. As to quaternary structure, monomer.

The protein resides in the cytoplasm. It catalyses the reaction (2R)-3-phosphoglycerate + ATP = (2R)-3-phospho-glyceroyl phosphate + ADP. The protein operates within carbohydrate degradation; glycolysis; pyruvate from D-glyceraldehyde 3-phosphate: step 2/5. The polypeptide is Phosphoglycerate kinase (Hahella chejuensis (strain KCTC 2396)).